The sequence spans 830 residues: Histone acetyltransferase KAT2A (830 aa).

Residues 1–94 are disordered; it reads MAEPSQAPNP…RKAQVRGLPR (94 aa). An N-acetylalanine modification is found at Ala2. 2 stretches are compositionally biased toward pro residues: residues 7–33 and 41–51; these read APNPVPAAQPRPLHSPAPAPTSTPAPS and APTPAPAPAPA. Over residues 58 to 69 the composition is skewed to gly residues; it reads TGSGGAGVGSGG. The segment covering 83–94 has biased composition (basic residues); the sequence is SQRKAQVRGLPR. Ser302 is modified (phosphoserine). Positions 398-417 are enriched in low complexity; it reads SFSPSMGGGSNSSLSLDSAG. The segment at 398-426 is disordered; the sequence is SFSPSMGGGSNSSLSLDSAGTEPMPAGEK. The 154-residue stretch at 496–649 folds into the N-acetyltransferase domain; that stretch reads VIGNSLTPKA…GATLMECELN (154 aa). An N6-acetyllysine modification is found at Lys542. The active-site Proton donor/acceptor is the Glu568. Acetyl-CoA contacts are provided by residues 572-574, 579-585, and Tyr610; these read CAV and QVKGYGT. Residues 572-574, 579-585, and Tyr610 each bind succinyl-CoA; these read CAV and QVKGYGT. Residue Lys721 forms a Glycyl lysine isopeptide (Lys-Gly) (interchain with G-Cter in SUMO2) linkage. A Bromo domain is found at 721-825; sequence KDPDQLYTTL…KFFYFKLKEG (105 aa). Thr728 is modified (phosphothreonine). Glycyl lysine isopeptide (Lys-Gly) (interchain with G-Cter in SUMO2) cross-links involve residues Lys752 and Lys784.

Belongs to the acetyltransferase family. GCN5 subfamily. In terms of assembly, interacts with EP300, CREBBP and ADA2. Component of the TFTC-HAT complex, at least composed of TAF5L, TAF6L, TAF3, TADA3L, SUPT3H/SPT3, TAF2/TAFII150, TAF4/TAFII135, TAF5/TAFII100, KAT2A/GCN5L2, TAF10 and TRRAP. Component of the STAGA transcription coactivator-HAT complex, at least composed of SUPT3H, KAT2A, SUPT7L, TAF5L, TAF6L, TADA3L, TAD1L, TAF10, TAF12, TRRAP and TAF9. The STAGA core complex is associated with a subcomplex required for histone deubiquitination composed of ATXN7L3, ENY2 and USP22. Component of the ADA2A-containing complex (ATAC), composed of KAT14, KAT2A, TADA2L, TADA3L, ZZ3, MBIP, WDR5, YEATS2, CCDC101 and DR1. In the complex, it probably interacts directly with KAT14, MBIP and WDR5. Interacts with PML. Interacts with CEBPB. Interacts with TACC1, TACC2 and TACC3. Interacts with RELA. Interacts with NFATC2. Interacts with TBX5. Interacts with PLK4. Associates with the 2-oxoglutarate dehydrogenase complex. Interacts with XPC; leading to KAT2A recruitment to promoters and subsequent acetylation of histones. Interacts with ERCC3/XPB; leading to KAT2A recruitment to promoters and subsequent acetylation of histones. Interacts with ISL1. Interactions of ISL1 with MLIP1 or KAT2A may be mutually exclusive. Post-translationally, acetylated at Lys-542, inhibiting the protein acetyltransferase activity. Deacetylation at Lys-542 by SIRT6 promotes phosphorylation at Ser-302 and Thr-728 and subsequent activation of the protein acetyltransferase activity, leading to acetylation and inactivation of PPARGC1A. In terms of tissue distribution, in brain, highly expressed in the hippocampal CA1 region (at protein level). Also expressed in the hippocampal subregions CA3 and the dentate gyrus as well as in the cortex and prefrontal cortex. Expressed at low level in the cerebellum.

Its subcellular location is the nucleus. The protein localises to the chromosome. It localises to the cytoplasm. The protein resides in the cytoskeleton. It is found in the microtubule organizing center. Its subcellular location is the centrosome. The catalysed reaction is L-lysyl-[histone] + acetyl-CoA = N(6)-acetyl-L-lysyl-[histone] + CoA + H(+). The enzyme catalyses L-lysyl-[protein] + acetyl-CoA = N(6)-acetyl-L-lysyl-[protein] + CoA + H(+). It catalyses the reaction succinyl-CoA + L-lysyl-[protein] = N(6)-succinyl-L-lysyl-[protein] + CoA + H(+). It carries out the reaction glutaryl-CoA + L-lysyl-[protein] = N(6)-glutaryl-L-lysyl-[protein] + CoA + H(+). Its function is as follows. Protein lysine acyltransferase that can act as a acetyltransferase, glutaryltransferase, succinyltransferase or malonyltransferase, depending on the context. Acts as a histone lysine succinyltransferase: catalyzes succinylation of histone H3 on 'Lys-79' (H3K79succ), with a maximum frequency around the transcription start sites of genes. Succinylation of histones gives a specific tag for epigenetic transcription activation. Association with the 2-oxoglutarate dehydrogenase complex, which provides succinyl-CoA, is required for histone succinylation. In different complexes, functions either as an acetyltransferase (HAT) or as a succinyltransferase: in the SAGA and ATAC complexes, acts as a histone acetyltransferase. Has significant histone acetyltransferase activity with core histones, but not with nucleosome core particles. Has a a strong preference for acetylation of H3 at 'Lys-9' (H3K9ac). Acetylation of histones gives a specific tag for epigenetic transcription activation. Recruited by the XPC complex at promoters, where it specifically mediates acetylation of histone variant H2A.Z.1/H2A.Z, thereby promoting expression of target genes. Involved in long-term memory consolidation and synaptic plasticity: acts by promoting expression of a hippocampal gene expression network linked to neuroactive receptor signaling. Acts as a positive regulator of T-cell activation: upon TCR stimulation, recruited to the IL2 promoter following interaction with NFATC2 and catalyzes acetylation of histone H3 at 'Lys-9' (H3K9ac), leading to promote IL2 expression. Required for growth and differentiation of craniofacial cartilage and bone by regulating acetylation of histone H3 at 'Lys-9' (H3K9ac). Regulates embryonic stem cell (ESC) pluripotency and differentiation. Also acetylates non-histone proteins, such as CEBPB, MRE11, PPARGC1A, PLK4 and TBX5. Involved in heart and limb development by mediating acetylation of TBX5, acetylation regulating nucleocytoplasmic shuttling of TBX5. Acts as a negative regulator of centrosome amplification by mediating acetylation of PLK4. Acts as a negative regulator of gluconeogenesis by mediating acetylation and subsequent inactivation of PPARGC1A. Also acts as a histone glutaryltransferase: catalyzes glutarylation of histone H4 on 'Lys-91' (H4K91glu), a mark that destabilizes nucleosomes by promoting dissociation of the H2A-H2B dimers from nucleosomes. This Mus musculus (Mouse) protein is Histone acetyltransferase KAT2A.